Reading from the N-terminus, the 181-residue chain is U1 small nuclear ribonucleoprotein C (181 aa).

The Matrin-type zinc-finger motif lies at proline 2 to aspartate 34. Composition is skewed to pro residues over residues proline 129–leucine 143 and proline 150–glycine 174. Positions proline 129–arginine 181 are disordered.

The protein belongs to the U1 small nuclear ribonucleoprotein C family. In terms of assembly, U1 snRNP is composed of the 7 core Sm proteins B/B', D1, D2, D3, E, F and G that assemble in a heptameric protein ring on the Sm site of the small nuclear RNA to form the core snRNP, and at least 3 U1 snRNP-specific proteins U1-70K, U1-A and U1-C. U1-C interacts with U1 snRNA and the 5' splice-site region of the pre-mRNA.

The protein localises to the nucleus. Its function is as follows. Component of the spliceosomal U1 snRNP, which is essential for recognition of the pre-mRNA 5' splice-site and the subsequent assembly of the spliceosome. U1-C is directly involved in initial 5' splice-site recognition for both constitutive and regulated alternative splicing. The interaction with the 5' splice-site seems to precede base-pairing between the pre-mRNA and the U1 snRNA. Stimulates commitment or early (E) complex formation by stabilizing the base pairing of the 5' end of the U1 snRNA and the 5' splice-site region. The protein is U1 small nuclear ribonucleoprotein C of Sclerotinia sclerotiorum (strain ATCC 18683 / 1980 / Ss-1) (White mold).